Reading from the N-terminus, the 60-residue chain is Metallothionein (60 aa).

An N-acetylmethionine modification is found at methionine 1. Residues 1–28 (MDPCECSKTGTCNCGGSCTCKNCSCTTC) are beta. 20 residues coordinate a divalent metal cation: cysteine 4, cysteine 6, cysteine 12, cysteine 14, cysteine 18, cysteine 20, cysteine 23, cysteine 25, cysteine 28, cysteine 32, cysteine 33, cysteine 35, cysteine 36, cysteine 40, cysteine 43, cysteine 47, cysteine 49, cysteine 54, cysteine 58, and cysteine 59. Residues 29-60 (NKSCCPCCPSGCPKCASGCVCKGKTCDTSCCQ) form an alpha region.

This sequence belongs to the metallothionein superfamily. Type 1 family.

Metallothioneins have a high content of cysteine residues that bind various heavy metals. The protein is Metallothionein (mt) of Pleuronectes platessa (European plaice).